A 1703-amino-acid chain; its full sequence is Ferlin 2 (1703 aa).

C2 domains are found at residues 18-141 (IRKL…KTWL) and 207-332 (KQPV…FRWF). Disordered stretches follow at residues 913–937 (NQFN…FDDN), 970–1025 (NLDK…TSST), and 1194–1228 (KNKS…QKLG). Over residues 916–928 (NDDDEGDNEDEQD) the composition is skewed to acidic residues. Residues 979 to 991 (QPQSLKNLQNLDS) are compositionally biased toward polar residues. The span at 993–1009 (SKADQKSQFDLKSESKS) shows a compositional bias: basic and acidic residues. The span at 1198–1209 (NRSSMSLSMRSS) shows a compositional bias: low complexity. One can recognise a C2 3 domain in the interval 1466-1595 (VARIIPPSTI…LKKLKEGIVF (130 aa)). The tract at residues 1628–1651 (AAESDPVGEGQNEPNKDPILEKPK) is disordered. The segment covering 1641-1651 (PNKDPILEKPK) has biased composition (basic and acidic residues). Residues 1681 to 1701 (FAGIFVSIVTMMILFVKPGIL) form a helical membrane-spanning segment.

The protein belongs to the ferlin family.

The protein localises to the membrane. Regulates mucocyst exocytosis. The polypeptide is Ferlin 2 (Tetrahymena thermophila (strain SB210)).